The following is a 67-amino-acid chain: Protein AaeX (67 aa).

Transmembrane regions (helical) follow at residues F10 to V30 and F43 to F63.

Belongs to the AaeX family.

The protein localises to the cell membrane. The sequence is that of Protein AaeX from Pectobacterium atrosepticum (strain SCRI 1043 / ATCC BAA-672) (Erwinia carotovora subsp. atroseptica).